The primary structure comprises 142 residues: Small ribosomal subunit protein uS9 (142 aa).

This sequence belongs to the universal ribosomal protein uS9 family. As to quaternary structure, component of the small ribosomal subunit (SSU). Mature N.crassa ribosomes consist of a small (40S) and a large (60S) subunit. The 40S small subunit contains 1 molecule of ribosomal RNA (18S rRNA) and at least 32 different proteins. The large 60S subunit contains 3 rRNA molecules (26S, 5.8S and 5S rRNA) and at least 42 different proteins.

It localises to the cytoplasm. In terms of biological role, component of the ribosome, a large ribonucleoprotein complex responsible for the synthesis of proteins in the cell. The small ribosomal subunit (SSU) binds messenger RNAs (mRNAs) and translates the encoded message by selecting cognate aminoacyl-transfer RNA (tRNA) molecules. The large subunit (LSU) contains the ribosomal catalytic site termed the peptidyl transferase center (PTC), which catalyzes the formation of peptide bonds, thereby polymerizing the amino acids delivered by tRNAs into a polypeptide chain. The nascent polypeptides leave the ribosome through a tunnel in the LSU and interact with protein factors that function in enzymatic processing, targeting, and the membrane insertion of nascent chains at the exit of the ribosomal tunnel. This chain is Small ribosomal subunit protein uS9 (rps-16), found in Neurospora crassa (strain ATCC 24698 / 74-OR23-1A / CBS 708.71 / DSM 1257 / FGSC 987).